Here is a 418-residue protein sequence, read N- to C-terminus: Serine hydroxymethyltransferase (418 aa).

(6S)-5,6,7,8-tetrahydrofolate-binding positions include Leu120 and 124–126 (GHL). The residue at position 229 (Lys229) is an N6-(pyridoxal phosphate)lysine. 353–355 (SPF) contacts (6S)-5,6,7,8-tetrahydrofolate.

The protein belongs to the SHMT family. As to quaternary structure, homodimer. The cofactor is pyridoxal 5'-phosphate.

It localises to the cytoplasm. It catalyses the reaction (6R)-5,10-methylene-5,6,7,8-tetrahydrofolate + glycine + H2O = (6S)-5,6,7,8-tetrahydrofolate + L-serine. It functions in the pathway one-carbon metabolism; tetrahydrofolate interconversion. The protein operates within amino-acid biosynthesis; glycine biosynthesis; glycine from L-serine: step 1/1. Its function is as follows. Catalyzes the reversible interconversion of serine and glycine with tetrahydrofolate (THF) serving as the one-carbon carrier. This reaction serves as the major source of one-carbon groups required for the biosynthesis of purines, thymidylate, methionine, and other important biomolecules. Also exhibits THF-independent aldolase activity toward beta-hydroxyamino acids, producing glycine and aldehydes, via a retro-aldol mechanism. The chain is Serine hydroxymethyltransferase from Psychrobacter cryohalolentis (strain ATCC BAA-1226 / DSM 17306 / VKM B-2378 / K5).